The sequence spans 439 residues: Histidine--tRNA ligase (439 aa).

The protein belongs to the class-II aminoacyl-tRNA synthetase family. As to quaternary structure, homodimer.

It is found in the cytoplasm. The enzyme catalyses tRNA(His) + L-histidine + ATP = L-histidyl-tRNA(His) + AMP + diphosphate + H(+). This chain is Histidine--tRNA ligase, found in Leptospira interrogans serogroup Icterohaemorrhagiae serovar copenhageni (strain Fiocruz L1-130).